The primary structure comprises 492 residues: Aerolysin (492 aa).

The signal sequence occupies residues 1 to 21 (MKALKITGLSLIISATLAAQT). 2 disulfides stabilise this stretch: cysteine 42–cysteine 98 and cysteine 182–cysteine 187. Residues 68 to 84 (WQISGLANNWVILGPGY) form an interaction with host N-linked glycan region. Residues 256-288 (YGLSEKVSTKNKFKWPLVGETEVSIEIAANQSW) form a part of the transmembrane beta-barrel after proteolytic activation of the toxin and insertion into the host membrane region. Residues 346 to 355 (RWGGNAWHTH) are interaction with glycans from host GPI-anchor. Residues 446 to 492 (GSDSKVRRTRSVDGANTGLKLDIPLDAQELAELGFENVTLSVTPARN) constitute a propeptide that is removed on maturation.

Belongs to the aerolysin family. Homodimer in solution; homoheptamer in the host membrane. After binding to GPI-anchored proteins in target membranes and proteolytic removal of the C-terminal propeptide, the protein assembles into a heptameric pre-pore complex. A further conformation change leads to insertion into the host membrane. Proteolytic cleavage and subsequent release of the propeptide trigger a major conformation change, leading to the formation of a heptameric pre-pore that then inserts into the host membrane.

It is found in the secreted. The protein localises to the host cell membrane. Functionally, secreted, cytolytic toxin that forms pores in host membranes after proteolytic removal of a C-terminal propeptide, leading to destruction of the membrane permeability barrier and cell death. The pores are formed by transmembrane beta-strands and are approximately 3 nm in diameter. The polypeptide is Aerolysin (aerA) (Aeromonas enteropelogenes (Aeromonas trota)).